The following is a 212-amino-acid chain: Thymidylate kinase (212 aa).

10–17 lines the ATP pocket; that stretch reads GLEGAGKT.

The protein belongs to the thymidylate kinase family.

It carries out the reaction dTMP + ATP = dTDP + ADP. Phosphorylation of dTMP to form dTDP in both de novo and salvage pathways of dTTP synthesis. The sequence is that of Thymidylate kinase from Yersinia pseudotuberculosis serotype O:1b (strain IP 31758).